Consider the following 545-residue polypeptide: Chaperonin GroEL 1 (545 aa).

Residues 29–32 (TLGP), 86–90 (DGTTT), G413, 479–481 (DAA), and D495 contribute to the ATP site. Positions 525–545 (PEPKENNPAGSGAGMGGDFDY) are disordered. The segment covering 535–545 (SGAGMGGDFDY) has biased composition (gly residues).

This sequence belongs to the chaperonin (HSP60) family. As to quaternary structure, forms a cylinder of 14 subunits composed of two heptameric rings stacked back-to-back. Interacts with the co-chaperonin GroES.

It localises to the cytoplasm. The catalysed reaction is ATP + H2O + a folded polypeptide = ADP + phosphate + an unfolded polypeptide.. Functionally, together with its co-chaperonin GroES, plays an essential role in assisting protein folding. The GroEL-GroES system forms a nano-cage that allows encapsulation of the non-native substrate proteins and provides a physical environment optimized to promote and accelerate protein folding. In Thermostichus vulcanus (Synechococcus vulcanus), this protein is Chaperonin GroEL 1.